Consider the following 146-residue polypeptide: Universal stress protein A homolog 2 (146 aa).

The protein belongs to the universal stress protein A family. In terms of assembly, homodimer.

The protein resides in the cytoplasm. In terms of biological role, involved in stress response. This Coxiella burnetii (strain RSA 493 / Nine Mile phase I) protein is Universal stress protein A homolog 2 (uspA2).